Reading from the N-terminus, the 123-residue chain is Small ribosomal subunit protein uS12cz/uS12cy (123 aa).

This sequence belongs to the universal ribosomal protein uS12 family. In terms of assembly, part of the 30S ribosomal subunit.

The protein resides in the plastid. It localises to the chloroplast. With S4 and S5 plays an important role in translational accuracy. Located at the interface of the 30S and 50S subunits. The chain is Small ribosomal subunit protein uS12cz/uS12cy (rps12-A) from Arabis hirsuta (Hairy rock-cress).